A 689-amino-acid polypeptide reads, in one-letter code: PR domain zinc finger protein 8 (689 aa).

An SET domain is found at 16–131 (KAVQQCLTDI…KDEELLVWYG (116 aa)). Tyrosine 130 contacts S-adenosyl-L-methionine. A C2H2-type 1 zinc finger spans residues 155 to 183 (YTCLECSQRFQFEFPYVAHLRFRCPKRLH). 2 disordered regions span residues 185–333 (ADIS…VGGR) and 397–506 (SLQE…QPAR). Residues 193–210 (QGGGVGTKDHGGGGGGGK) show a composition bias toward gly residues. Composition is skewed to low complexity over residues 241-258 (PESSNPSAAAGGSSAKPS) and 273-286 (GGSSCSPAQSLSSG). The segment covering 322-333 (EGGGGAGLVGGR) has biased composition (gly residues). The span at 423-433 (STPAAASPVGA) shows a compositional bias: low complexity. Positions 472-491 (TSGGGGTGAGAAGGAGGGQG) are enriched in gly residues. 2 C2H2-type zinc fingers span residues 625–648 (NWCAKCNASFRMTSDLVYHMRSHH) and 666–688 (LKCPICNESFRERHHLSRHMTSH).

The protein belongs to the class V-like SAM-binding methyltransferase superfamily. Interacts with EPM2A and NHLRC1. This interaction sequesters EPM2A and NHLRC1 to the nucleus. Interacts with BHLHE22. In terms of tissue distribution, expressed in brain, heart, skeletal muscle, testes, prostate.

It is found in the nucleus. Its function is as follows. Probable histone methyltransferase, preferentially acting on 'Lys-9' of histone H3. Involved in the control of steroidogenesis through transcriptional repression of steroidogenesis marker genes such as CYP17A1 and LHCGR. Forms with BHLHE22 a transcriptional repressor complex controlling genes involved in neural development and neuronal differentiation. In the retina, it is required for rod bipolar and type 2 OFF-cone bipolar cell survival. This chain is PR domain zinc finger protein 8 (PRDM8), found in Homo sapiens (Human).